The following is a 177-amino-acid chain: MKSRIHVQHGDITQLTVDVIVNAANASLLGGGGVDGAIHRAAGPTLLEACKKVRQQQGECPAGHAVITLAGNLPAKAVIHTVGPVWRGGDHNESQLLEDAYFNSLQLVLANGYRSVAFPAISTGAYGYPRPAAAEIAVNTVADFLARHALPEQVYFVCYDEETARLYERLLTQQGDE.

Residues 1-175 (MKSRIHVQHG…LYERLLTQQG (175 aa)) form the Macro domain. Substrate contacts are provided by residues 11–12 (DI), Asn-25, 33–35 (GVD), and 122–126 (STGAY). Residue Asp-35 is the Proton acceptor of the active site.

This sequence belongs to the MacroD-type family. YmdB subfamily. As to quaternary structure, homodimer. Interacts with RNase III.

It catalyses the reaction 3''-O-acetyl-ADP-D-ribose + H2O = ADP-D-ribose + acetate + H(+). The catalysed reaction is 2''-O-acetyl-ADP-D-ribose + H2O = ADP-D-ribose + acetate + H(+). Its function is as follows. Deacetylates O-acetyl-ADP ribose to yield ADP-ribose and free acetate. Down-regulates ribonuclease 3 (RNase III) activity. Acts by interacting directly with the region of the ribonuclease that is required for dimerization/activation. The sequence is that of O-acetyl-ADP-ribose deacetylase from Citrobacter koseri (strain ATCC BAA-895 / CDC 4225-83 / SGSC4696).